The chain runs to 1343 residues: ABC multidrug transporter atrD (1343 aa).

Positions 1–10 (MSPLETNPLS) are enriched in polar residues. Residues 1-67 (MSPLETNPLS…HRPKSSSSNN (67 aa)) are disordered. A compositionally biased stretch (low complexity) spans 20-31 (ETSTTEEQASTP). Residue Asn99 is glycosylated (N-linked (GlcNAc...) asparagine). Helical transmembrane passes span 114-134 (ILIMVISTICAIAAGAALPLF), 163-183 (YFVYLGIGEFVTVYVSTVGFI), 235-255 (KVGLTLTALATFVTAFIIAYV), and 263-283 (ICSSTIVALVLTMGGGSQFII). The ABC transmembrane type-1 1 domain occupies 115-403 (LIMVISTICA…VSPNAQAFTN (289 aa)). Asn309 carries N-linked (GlcNAc...) asparagine glycosylation. Helical transmembrane passes span 339-359 (IVMGFMIGAMFGLMYSNYGLG) and 366-386 (FLVDGAVDVGDILTVLMAILI). An ABC transporter 1 domain is found at 438–683 (IELRNVKHIY…GGAYRKLVEA (246 aa)). 473–480 (GPSGSGKS) is an ATP binding site. Asn545 is a glycosylation site (N-linked (GlcNAc...) asparagine). 2 helical membrane passes run 773–793 (MLIGLVFSVLAGGGQPTQAVL) and 820–840 (LMFFVVGIIQFITQSTNGAAF). Residues 774 to 1063 (LIGLVFSVLA…VFSFAPDMGK (290 aa)) form the ABC transmembrane type-1 2 domain. The N-linked (GlcNAc...) asparagine glycan is linked to Asn872. The next 4 helical transmembrane spans lie at 887 to 907 (HLSGVSGVTLGTILMTSTTLG), 920 to 942 (LALVCISVVPVLLACGFYRFYML), 1010 to 1030 (ALVFFCVALGFWYGGTLLGHH), and 1037 to 1057 (FFVCFSEILFGAQSAGTVFSF). An N-linked (GlcNAc...) asparagine glycan is attached at Asn1083. The region spanning 1098–1336 (IEFRNVHFRY…KGRYYELVNL (239 aa)) is the ABC transporter 2 domain. Residue 1133-1140 (GPSGCGKS) participates in ATP binding.

This sequence belongs to the ABC transporter superfamily. ABCB family. Multidrug resistance exporter (TC 3.A.1.201) subfamily.

The protein resides in the cell membrane. With respect to regulation, fenamirol efflux transporter activity is inhibited by the cyclosporin derivative PSC 833, nigericin, reserpine and valinomycin. The effect of reserpine is transiant, while that of the cyclosporin derivative PSC 833, nigericin and valinomycin is proportional to the time of exposure. Cyclohexinmide has inhibitory effect only when applied prior to addition of the fungicide. In terms of biological role, pleiotropic ABC efflux transporter involved in the protection of the cells against a wide range of toxic compounds. Confers resistance to the azole fenarimol via efflux transport. May also be involved in the secretion of penicillin. In Emericella nidulans (strain FGSC A4 / ATCC 38163 / CBS 112.46 / NRRL 194 / M139) (Aspergillus nidulans), this protein is ABC multidrug transporter atrD.